The chain runs to 529 residues: Peptide chain release factor 3 (529 aa).

The region spanning 11–280 is the tr-type G domain; sequence AKRRTFAIIS…GLVKWAPAPM (270 aa). GTP contacts are provided by residues 20-27, 88-92, and 142-145; these read SHPDAGKT, DTPGH, and NKLD.

The protein belongs to the TRAFAC class translation factor GTPase superfamily. Classic translation factor GTPase family. PrfC subfamily.

It is found in the cytoplasm. Functionally, increases the formation of ribosomal termination complexes and stimulates activities of RF-1 and RF-2. It binds guanine nucleotides and has strong preference for UGA stop codons. It may interact directly with the ribosome. The stimulation of RF-1 and RF-2 is significantly reduced by GTP and GDP, but not by GMP. The sequence is that of Peptide chain release factor 3 from Photorhabdus laumondii subsp. laumondii (strain DSM 15139 / CIP 105565 / TT01) (Photorhabdus luminescens subsp. laumondii).